Reading from the N-terminus, the 781-residue chain is Beta-mannosyltransferase 4 (781 aa).

Residues 1–17 lie on the Cytoplasmic side of the membrane; the sequence is MTKSYMPLFRSPRQFKK. A helical membrane pass occupies residues 18-38; it reads IYFILIPLILAVIILHVFFDG. Residues 39–781 are Extracellular-facing; it reads FNKISEYSPT…EKEDDDDIEV (743 aa). Residues 640 to 733 adopt a coiled-coil conformation; it reads KLGDSEAAIK…AKDEDKNEDE (94 aa). Composition is skewed to basic and acidic residues over residues 663-728 and 736-750; these read KAEK…KDED and KEKNDESGLTEKSEV. The interval 663–781 is disordered; it reads KAEKEKAEKE…EKEDDDDIEV (119 aa). A compositionally biased stretch (acidic residues) spans 751–781; sequence EENGENTNEGGEDDGDGDGEEEKEDDDDIEV.

Belongs to the BMT family.

Its subcellular location is the membrane. Its function is as follows. Beta-mannosyltransferase involved in cell wall biosynthesis. Required for the elongation of beta-mannose chains on the acid-labile fraction of cell wall phosphopeptidomannan. The protein is Beta-mannosyltransferase 4 (BMT4) of Candida albicans (strain SC5314 / ATCC MYA-2876) (Yeast).